Here is a 37-residue protein sequence, read N- to C-terminus: Large ribosomal subunit protein bL36c (37 aa).

This sequence belongs to the bacterial ribosomal protein bL36 family.

It is found in the plastid. The protein resides in the chloroplast. The chain is Large ribosomal subunit protein bL36c from Chaetosphaeridium globosum (Charophycean green alga).